Here is a 586-residue protein sequence, read N- to C-terminus: Arginine--tRNA ligase (586 aa).

A 'HIGH' region motif is present at residues 133–143; that stretch reads ANPTGPLNIVS.

Belongs to the class-I aminoacyl-tRNA synthetase family. As to quaternary structure, monomer.

Its subcellular location is the cytoplasm. The catalysed reaction is tRNA(Arg) + L-arginine + ATP = L-arginyl-tRNA(Arg) + AMP + diphosphate. The protein is Arginine--tRNA ligase of Leptospira borgpetersenii serovar Hardjo-bovis (strain JB197).